Here is a 154-residue protein sequence, read N- to C-terminus: MTALCPCQSGLDYADCCEPFHSFKTCPQTAEQLMRSRYCAYVLKNIDYVIQTTVPGQQAQLDKTLLQDWANDTSWTGLQIVRHQPAVSKIHSKVEFNAFFKVNDEKQTHNENSLFVKIDGRWYFVDSTVELPNQKHPCLCGSGKKFKHCCGAYL.

The protein belongs to the UPF0225 family.

The sequence is that of UPF0225 protein Asuc_0343 from Actinobacillus succinogenes (strain ATCC 55618 / DSM 22257 / CCUG 43843 / 130Z).